Here is a 387-residue protein sequence, read N- to C-terminus: MEKIEEQFANLHIVKCSLGTKEPTYLLGIDTSKTVQAGKENLVAVLCSNGSIRIYDKERLNVLREFSGYPGLLNGVRFANSCDSVYSACTDGTVKCWDARVAREKPVQLFKGYPSNIFISFDINCNDHIICAGTEKVDDDALLVFWDARMNSQNLSTTKDSLGAYSETHSDDVTQVRFHPSNPNMVVSGSSDGLVNVFDINIDNEEDALVTTCNSISSVSCIGWSGKGYKQIYCMTHDEGFYWWDLNHLDTDEPVTRLNIQDVREVVNMKEDALDYLIGGLYHEKTDTLHVIGGTNKGRIHLMNCSMSGLTHVTSLQGGHAATVRSFCWNVQDDSLLTGGEDAQLLLWKPGAIEKTFTKKESMKIASSVHQRVRVHSNDSYKRRKKQ.

WD repeat units follow at residues 21-65 (KEPT…VLRE), 68-107 (GYPG…EKPV), 112-156 (GYPS…QNLS), 168-208 (THSD…EEDA), 214-254 (NSIS…TDEP), and 319-358 (GHAA…KTFT).

The chain is WD repeat-containing protein 89 (WDR89) from Homo sapiens (Human).